The sequence spans 155 residues: Ribosomal RNA large subunit methyltransferase H (155 aa).

Residues L72, G103, and 122–127 (LSPLTL) contribute to the S-adenosyl-L-methionine site.

The protein belongs to the RNA methyltransferase RlmH family. In terms of assembly, homodimer.

The protein localises to the cytoplasm. The enzyme catalyses pseudouridine(1915) in 23S rRNA + S-adenosyl-L-methionine = N(3)-methylpseudouridine(1915) in 23S rRNA + S-adenosyl-L-homocysteine + H(+). Specifically methylates the pseudouridine at position 1915 (m3Psi1915) in 23S rRNA. The chain is Ribosomal RNA large subunit methyltransferase H from Mannheimia succiniciproducens (strain KCTC 0769BP / MBEL55E).